The sequence spans 299 residues: Probable lipid kinase YegS-like (299 aa).

Positions 2–133 (ATYPESLLIL…VDIAQVNDKT (132 aa)) constitute a DAGKc domain. ATP-binding positions include Thr-40, 66–72 (GDGTINE), and Thr-95. Mg(2+) is bound by residues Leu-215, Asp-218, and Leu-220. Glu-271 serves as the catalytic Proton acceptor.

It belongs to the diacylglycerol/lipid kinase family. YegS lipid kinase subfamily. Mg(2+) serves as cofactor. The cofactor is Ca(2+).

The protein resides in the cytoplasm. Its function is as follows. Probably phosphorylates lipids; the in vivo substrate is unknown. This Enterobacter sp. (strain 638) protein is Probable lipid kinase YegS-like.